The chain runs to 120 residues: HTH-type transcriptional regulator NmtR (120 aa).

In terms of domain architecture, HTH arsR-type spans 15–109; that stretch reads LDSQAAAQVA…EAIYHSEHLH (95 aa). The segment at residues 49–72 is a DNA-binding region (H-T-H motif); it reads VTDLAEAIGMEQSAVSHQLRVLRN. Residues Asp91, His93, His104, and His107 each coordinate Ni(2+).

Homodimer.

Its activity is regulated as follows. Binding to DNA is inhibited by nickel and, to some extent, cobalt ions. Its function is as follows. Represses transcription of ctpJ/nmtA, by binding to its promoter region. In Mycobacterium tuberculosis (strain ATCC 25618 / H37Rv), this protein is HTH-type transcriptional regulator NmtR (nmtR).